A 103-amino-acid polypeptide reads, in one-letter code: MALSSIFGGGSPSQQSNLPTSSASSSVKDQLKGQIAQELAVANATELVNKVTENCFEKCLMAPYTSKQDTCVDQCLAKYMRSWNAISQAYVARIQQASANGDI.

Residues 1–25 form a disordered region; it reads MALSSIFGGGSPSQQSNLPTSSASS. Polar residues predominate over residues 12–25; sequence PSQQSNLPTSSASS. The Twin CX3C motif motif lies at 55 to 75; it reads CFEKCLMAPYTSKQDTCVDQC. Cystine bridges form between Cys-55–Cys-75 and Cys-59–Cys-71.

The protein belongs to the small Tim family. As to quaternary structure, heterohexamer; composed of 3 copies of TIM8 and 3 copies of TIM13, named soluble 70 kDa complex. Associates with the TIM22 complex, whose core is composed of TIM22 and TIM54. Interacts with the transmembrane regions of multi-pass transmembrane proteins in transit.

The protein resides in the mitochondrion inner membrane. In terms of biological role, mitochondrial intermembrane chaperone that participates in the import and insertion of some multi-pass transmembrane proteins into the mitochondrial inner membrane. Also required for the transfer of beta-barrel precursors from the TOM complex to the sorting and assembly machinery (SAM complex) of the outer membrane. Acts as a chaperone-like protein that protects the hydrophobic precursors from aggregation and guide them through the mitochondrial intermembrane space. The TIM8-TIM13 complex is non essential and only mediates the import of few proteins, while the predominant TIM9-TIM10 70 kDa complex is crucial and mediates the import of much more proteins. This is Mitochondrial import inner membrane translocase subunit TIM13 (TIM13) from Eremothecium gossypii (strain ATCC 10895 / CBS 109.51 / FGSC 9923 / NRRL Y-1056) (Yeast).